Here is a 340-residue protein sequence, read N- to C-terminus: uncharacterized protein (340 aa).

The segment at 284-340 (DHSTPTNYQQETPASQQQLDQENEPIKPSKKSNSSSLPRGTTQPKSNSINRVSKLID) is disordered. Composition is skewed to polar residues over residues 286–303 (STPT…QQLD) and 320–334 (LPRG…SINR).

This is an uncharacterized protein from Mycoplasma genitalium (strain ATCC 33530 / DSM 19775 / NCTC 10195 / G37) (Mycoplasmoides genitalium).